Here is a 463-residue protein sequence, read N- to C-terminus: Heterogeneous nuclear ribonucleoprotein K (463 aa).

An N-acetylmethionine modification is found at Met1. The segment at 1-37 (METEQPEETFPNTETNGEFGKRPAEDMEEEQAFKRSR) is disordered. Residues 1–276 (METEQPEETF…GRGGRPMPPS (276 aa)) are necessary for interaction with DDX1. The span at 19-37 (FGKRPAEDMEEEQAFKRSR) shows a compositional bias: basic and acidic residues. Lys34 carries the post-translational modification N6-acetyllysine; alternate. Residue Lys34 forms a Glycyl lysine isopeptide (Lys-Gly) (interchain with G-Cter in SUMO1); alternate linkage. Lys34 participates in a covalent cross-link: Glycyl lysine isopeptide (Lys-Gly) (interchain with G-Cter in SUMO2); alternate. A Phosphoserine modification is found at Ser36. Thr39 is subject to Phosphothreonine. Positions 42–104 (MVELRILLQS…ETIGEILKKI (63 aa)) constitute a KH 1 domain. Glycyl lysine isopeptide (Lys-Gly) (interchain with G-Cter in SUMO2) cross-links involve residues Lys52 and Lys60. Repeat copies occupy residues 54–76 (AGAV…NASV) and 59–62 (GKGG). The tract at residues 54–421 (AGAVIGKGGK…QIRHESGASI (368 aa)) is 2 X 22 AA approximate repeats. Residues 59 to 407 (GKGGKNIKAL…LAGSIIGKGG (349 aa)) are 5 X 4 AA repeats of G-X-G-G. Phosphoserine is present on residues Ser75 and Ser116. Residues 144 to 209 (DCELRLLIHQ…DRVVECIKII (66 aa)) form the KH 2 domain. Lys163 participates in a covalent cross-link: Glycyl lysine isopeptide (Lys-Gly) (interchain with G-Cter in SUMO1); alternate. Lys163 is covalently cross-linked (Glycyl lysine isopeptide (Lys-Gly) (interchain with G-Cter in SUMO2); alternate). Lys198 carries the post-translational modification N6-acetyllysine. Positions 209 to 337 (ILDLISESPI…RPGDRYDGMV (129 aa)) are interaction with ZIK1. A phosphoserine mark is found at Ser214 and Ser216. Residue Lys219 forms a Glycyl lysine isopeptide (Lys-Gly) (interchain with G-Cter in SUMO2); alternate linkage. Lys219 carries the N6-succinyllysine; alternate modification. Residues 236–273 (YGGFTMMFDDRRGRPVGFPMRGRGGFDRMPPGRGGRPM) form an RNA-binding RGG-box region. Repeat copies occupy residues 245-250 (DRRGRP), 257-260 (GRGG), and 267-270 (GRGG). Positions 245-329 (DRRGRPVGFP…LMAYDRRGRP (85 aa)) are 2 X 6 AA repeats of D-R-R-G-R-P. Residues 250–329 (PVGFPMRGRG…LMAYDRRGRP (80 aa)) form a disordered region. Residues 252-266 (GFPMRGRGGFDRMPP) are compositionally biased toward low complexity. Residues 276–285 (SRRDYDDMSP) are compositionally biased toward basic and acidic residues. At Ser284 the chain carries Phosphoserine. The 3-4 repeat unit spans residues 295–298 (GRGG). An Omega-N-methylarginine modification is found at Arg316. The 2-2 repeat unit spans residues 324-329 (DRRGRP). Arg377 bears the Omega-N-methylarginine mark. The residue at position 379 (Ser379) is a Phosphoserine. Position 380 is a phosphotyrosine (Tyr380). The KH 3 domain maps to 387–451 (IITTQVTIPK…DQIQNAQYLL (65 aa)). Tandem repeats lie at residues 399-421 (AGSI…GASI) and 404-407 (GKGG). Position 405 is an N6-acetyllysine; alternate (Lys405). Lys405 is covalently cross-linked (Glycyl lysine isopeptide (Lys-Gly) (interchain with G-Cter in SUMO2); alternate). Phosphoserine is present on Ser420. Lys422 participates in a covalent cross-link: Glycyl lysine isopeptide (Lys-Gly) (interchain with G-Cter in SUMO1); alternate. Lys422 is covalently cross-linked (Glycyl lysine isopeptide (Lys-Gly) (interchain with G-Cter in SUMO2); alternate). Lys422 is covalently cross-linked (Glycyl lysine isopeptide (Lys-Gly) (interchain with G-Cter in SUMO); alternate).

In terms of assembly, identified in the spliceosome C complex. Interacts with ANKRD28, RBM42 and ZIK1. Interacts with DDX1. Interacts with MDM2; this interaction leads to ubiquitination and proteasomal degradation. Interacts with p53/TP53. Interacts with BRDT. Interacts with IVNS1ABP. Interacts with PPIA/CYPA. Part of a transcription inhibitory ribonucleoprotein complex composed at least of the circular RNA circZNF827, ZNF827 and HNRNPL. In terms of processing, sumoylated by CBX4. Sumoylation is increased upon DNA damage, such as that produced by doxorubicin, etoposide, UV light and camptothecin, due to enhanced CBX4 phosphorylation by HIPK2 under these conditions. Post-translationally, ubiquitinated by MDM2. Doxorubicin treatment does not affect monoubiquitination, but slightly decreases HNRNPK poly-ubiquitination. O-glycosylated (O-GlcNAcylated), in a cell cycle-dependent manner.

It is found in the cytoplasm. The protein localises to the nucleus. Its subcellular location is the nucleoplasm. The protein resides in the cell projection. It localises to the podosome. In terms of biological role, one of the major pre-mRNA-binding proteins. Binds tenaciously to poly(C) sequences. Likely to play a role in the nuclear metabolism of hnRNAs, particularly for pre-mRNAs that contain cytidine-rich sequences. Can also bind poly(C) single-stranded DNA. Plays an important role in p53/TP53 response to DNA damage, acting at the level of both transcription activation and repression. When sumoylated, acts as a transcriptional coactivator of p53/TP53, playing a role in p21/CDKN1A and 14-3-3 sigma/SFN induction. As far as transcription repression is concerned, acts by interacting with long intergenic RNA p21 (lincRNA-p21), a non-coding RNA induced by p53/TP53. This interaction is necessary for the induction of apoptosis, but not cell cycle arrest. As part of a ribonucleoprotein complex composed at least of ZNF827, HNRNPL and the circular RNA circZNF827 that nucleates the complex on chromatin, may negatively regulate the transcription of genes involved in neuronal differentiation. The sequence is that of Heterogeneous nuclear ribonucleoprotein K (HNRNPK) from Oryctolagus cuniculus (Rabbit).